Reading from the N-terminus, the 607-residue chain is MNVVQQTFAELSIGEPEKRVEGRVYSVSGPVVVGCNMIGCAMYELVKVGSEGLAGEIIKIDKDQATIQVYEDTSGLCVGDTIVRTGLPLCAELGPGLFESIYDGIQRPLREIRESSGGIFIPKGVNIPALDREREYEFVPAVSAGDYVVGGDVFGKVYENSLIETKILVPPKKSGKVAFIACRGNYTLKDVVMELETGKGKEEMFMYHTWPVRIPRPIEEKKNATHPLFTGQRILDSLFPCVQGGTTAIPGAFGCGKTVISQSLSKYSNSDAIVYVGCGERGNEMSEVLMEFPKLTVGGKDDSIMKRTVLVANTSNMPVAAREASIYTGITISEYLRDQGMNVSMMADSTSRWAEALREISGRLAEMPADSGYPAYLGAKLAFFYERAGSVVCLGSPRRTGSVTIVGAVSPPGGDFSDPVTSATLGIVQVFWGLDKKLAQRKHFPSINWNLSYSKYFSNLEPYYEEVDPGFIVNRTKCREILQLDDDLSEIVQLVGKNALSETEKLILDISKLIKEDFLQQNGYSRYDNYCPFTKTRLMLRNIILYFDNSKNAITNYKLSWSTIRKETEDVFYGLMKMKFVMADKEMEPKLNKLKREIEGVFLKMLG.

251–258 provides a ligand contact to ATP; it reads GAFGCGKT.

It belongs to the ATPase alpha/beta chains family. As to quaternary structure, V-ATPase is a heteromultimeric enzyme composed of a peripheral catalytic V1 complex (components A to H) attached to an integral membrane V0 proton pore complex (components: a, c, c', c'', d, e, f and VOA1).

The protein resides in the vacuole membrane. The catalysed reaction is ATP + H2O + 4 H(+)(in) = ADP + phosphate + 5 H(+)(out). In terms of biological role, catalytic subunit of the V1 complex of vacuolar(H+)-ATPase (V-ATPase), a multisubunit enzyme composed of a peripheral complex (V1) that hydrolyzes ATP and a membrane integral complex (V0) that translocates protons. V-ATPase is responsible for acidifying and maintaining the pH of intracellular compartments. This chain is V-type proton ATPase catalytic subunit A (VMA1), found in Encephalitozoon cuniculi (strain GB-M1) (Microsporidian parasite).